We begin with the raw amino-acid sequence, 370 residues long: tRNA-specific 2-thiouridylase MnmA 1 (370 aa).

ATP-binding positions include 9–16 (GMSGGVDS) and M35. The segment at 95-97 (NPD) is interaction with target base in tRNA. Catalysis depends on C100, which acts as the Nucleophile. A disulfide bond links C100 and C196. G124 contributes to the ATP binding site. Positions 146-148 (KDQ) are interaction with tRNA. Catalysis depends on C196, which acts as the Cysteine persulfide intermediate. The segment at 306-307 (RY) is interaction with tRNA.

It belongs to the MnmA/TRMU family.

The protein localises to the cytoplasm. It carries out the reaction S-sulfanyl-L-cysteinyl-[protein] + uridine(34) in tRNA + AH2 + ATP = 2-thiouridine(34) in tRNA + L-cysteinyl-[protein] + A + AMP + diphosphate + H(+). In terms of biological role, catalyzes the 2-thiolation of uridine at the wobble position (U34) of tRNA, leading to the formation of s(2)U34. This chain is tRNA-specific 2-thiouridylase MnmA 1, found in Geobacillus kaustophilus (strain HTA426).